Here is a 434-residue protein sequence, read N- to C-terminus: UDP-N-acetylglucosamine 1-carboxyvinyltransferase (434 aa).

Position 22–23 (22–23) interacts with phosphoenolpyruvate; it reads KN. A UDP-N-acetyl-alpha-D-glucosamine-binding site is contributed by Arg-97. The Proton donor role is filled by Asp-121. 2 residues coordinate UDP-N-acetyl-alpha-D-glucosamine: Asp-319 and Met-341.

The protein belongs to the EPSP synthase family. MurA subfamily.

The protein resides in the cytoplasm. The catalysed reaction is phosphoenolpyruvate + UDP-N-acetyl-alpha-D-glucosamine = UDP-N-acetyl-3-O-(1-carboxyvinyl)-alpha-D-glucosamine + phosphate. It functions in the pathway cell wall biogenesis; peptidoglycan biosynthesis. Cell wall formation. Adds enolpyruvyl to UDP-N-acetylglucosamine. The chain is UDP-N-acetylglucosamine 1-carboxyvinyltransferase from Bacteroides fragilis (strain ATCC 25285 / DSM 2151 / CCUG 4856 / JCM 11019 / LMG 10263 / NCTC 9343 / Onslow / VPI 2553 / EN-2).